The following is a 1024-amino-acid chain: Carbamoyl phosphate synthase large chain (1024 aa).

The tract at residues 1–402 is carboxyphosphate synthetic domain; the sequence is MPKRTDLQTI…SLQKALRSTE (402 aa). Residues R129, R169, G175, G176, E208, I210, E215, G241, V242, H243, Q285, and E299 each coordinate ATP. The 196-residue stretch at 133-328 folds into the ATP-grasp 1 domain; the sequence is QAAMKKIGVE…IAKIAALLAV (196 aa). The Mg(2+) site is built by Q285, E299, and N301. Mn(2+)-binding residues include Q285, E299, and N301. The oligomerization domain stretch occupies residues 403-546; the sequence is GDIRGVYAEM…YSTYEWEDEV (144 aa). The tract at residues 547-929 is carbamoyl phosphate synthetic domain; that stretch reads APTDKPKVVI…AFYRAQLGAK (383 aa). Positions 671-863 constitute an ATP-grasp 2 domain; that stretch reads NALCERLGLP…LAKSAARIAA (193 aa). Residues R707, Q747, L749, E754, G779, V780, H781, S782, Q822, and E834 each coordinate ATP. Positions 822, 834, and 836 each coordinate Mg(2+). Mn(2+)-binding residues include Q822, E834, and N836. The region spanning 930–1024 is the MGS-like domain; the sequence is NYLPLEGTAL…GVRSLQEWVK (95 aa). The tract at residues 930–1024 is allosteric domain; that stretch reads NYLPLEGTAL…GVRSLQEWVK (95 aa).

Belongs to the CarB family. Composed of two chains; the small (or glutamine) chain promotes the hydrolysis of glutamine to ammonia, which is used by the large (or ammonia) chain to synthesize carbamoyl phosphate. Tetramer of heterodimers (alpha,beta)4. Requires Mg(2+) as cofactor. The cofactor is Mn(2+).

It catalyses the reaction hydrogencarbonate + L-glutamine + 2 ATP + H2O = carbamoyl phosphate + L-glutamate + 2 ADP + phosphate + 2 H(+). The enzyme catalyses hydrogencarbonate + NH4(+) + 2 ATP = carbamoyl phosphate + 2 ADP + phosphate + 2 H(+). The protein operates within amino-acid biosynthesis; L-arginine biosynthesis; carbamoyl phosphate from bicarbonate: step 1/1. It functions in the pathway pyrimidine metabolism; UMP biosynthesis via de novo pathway; (S)-dihydroorotate from bicarbonate: step 1/3. Functionally, large subunit of the glutamine-dependent carbamoyl phosphate synthetase (CPSase). CPSase catalyzes the formation of carbamoyl phosphate from the ammonia moiety of glutamine, carbonate, and phosphate donated by ATP, constituting the first step of 2 biosynthetic pathways, one leading to arginine and/or urea and the other to pyrimidine nucleotides. The large subunit (synthetase) binds the substrates ammonia (free or transferred from glutamine from the small subunit), hydrogencarbonate and ATP and carries out an ATP-coupled ligase reaction, activating hydrogencarbonate by forming carboxy phosphate which reacts with ammonia to form carbamoyl phosphate. This is Carbamoyl phosphate synthase large chain from Deinococcus radiodurans (strain ATCC 13939 / DSM 20539 / JCM 16871 / CCUG 27074 / LMG 4051 / NBRC 15346 / NCIMB 9279 / VKM B-1422 / R1).